The following is a 263-amino-acid chain: Hydroxyacylglutathione hydrolase (263 aa).

Positions 55, 57, 59, 60, 117, 134, and 172 each coordinate Zn(2+).

Belongs to the metallo-beta-lactamase superfamily. Glyoxalase II family. In terms of assembly, monomer. Zn(2+) is required as a cofactor.

It carries out the reaction an S-(2-hydroxyacyl)glutathione + H2O = a 2-hydroxy carboxylate + glutathione + H(+). It functions in the pathway secondary metabolite metabolism; methylglyoxal degradation; (R)-lactate from methylglyoxal: step 2/2. In terms of biological role, thiolesterase that catalyzes the hydrolysis of S-D-lactoyl-glutathione to form glutathione and D-lactic acid. This Shewanella baltica (strain OS195) protein is Hydroxyacylglutathione hydrolase.